The sequence spans 197 residues: Dephospho-CoA kinase (197 aa).

In terms of domain architecture, DPCK spans 3–197 (VYGLTGGIGS…QSLLHTHQNT (195 aa)). Position 11–16 (11–16 (GSGKTT)) interacts with ATP.

The protein belongs to the CoaE family.

It localises to the cytoplasm. The enzyme catalyses 3'-dephospho-CoA + ATP = ADP + CoA + H(+). Its pathway is cofactor biosynthesis; coenzyme A biosynthesis; CoA from (R)-pantothenate: step 5/5. Its function is as follows. Catalyzes the phosphorylation of the 3'-hydroxyl group of dephosphocoenzyme A to form coenzyme A. This chain is Dephospho-CoA kinase, found in Hydrogenovibrio crunogenus (strain DSM 25203 / XCL-2) (Thiomicrospira crunogena).